The chain runs to 656 residues: MADVPADLAAVWPRVLEQLLGEGRGQGVESKDEHWIRRCQPLALVADTALLAVPNEFAKGVLEGRLAPIVSETLSRECGRPIRIAITVDDTAGEPAGPAPQAPQSPPSRPQHRYEEPELPAPGQGGREEYRDRDEYEGYGRNRADQLPTARPAYPQEYQRPEPGSWPRPAQQDDYGWQQQRLGFPERDPYASPNQEPYGQEPPPPYSHENRTSYQQDYRPQPPERPSYDAQRGDYEQARGEYEQPRGDYDKPRGDYDQQRGDYDQRGPRRDLPEPPPGSGHVHRGGPVGPGPATGAPGPLAAQPAPATGPGEPTARLNPKYLFDTFVIGASNRFAHAAAVAVAEAPAKAYNPLFIYGESGLGKTHLLHAIGHYARSLYPGTRVRYVSSEEFTNEFINSIRDGKGDSFRKRYREMDILLVDDIQFLADKESTQEEFFHTFNTLHNANKQIVLSSDRPPKQLVTLEDRLRNRFEWGLITDVQPPELETRIAILRKKAVQEQLNAPPEVLEFIASRISRNIRELEGALIRVTAFASLNRQPVDLGLTEIVLKDLIPGGEDSAPEITSTAIMGATADYFGLTVEDLCGTSRGRALVTARQIAMYLCRELTDLSLPKIGALFGGRDHTTVMHADRKIRNLMAERRSIYNQVTELTNRIKNG.

A domain I, interacts with DnaA modulators region spans residues 1–100 (MADVPADLAA…TAGEPAGPAP (100 aa)). Residues 91–313 (TAGEPAGPAP…PAPATGPGEP (223 aa)) form a disordered region. The span at 97–109 (GPAPQAPQSPPSR) shows a compositional bias: pro residues. Residues 101 to 315 (QAPQSPPSRP…PATGPGEPTA (215 aa)) form a domain II region. 2 stretches are compositionally biased toward basic and acidic residues: residues 126–144 (GREE…RNRA) and 231–273 (QRGD…RDLP). Residues 291-313 (GPATGAPGPLAAQPAPATGPGEP) show a composition bias toward low complexity. The domain III, AAA+ region stretch occupies residues 316 to 532 (RLNPKYLFDT…GALIRVTAFA (217 aa)). ATP is bound by residues G360, G362, K363, and T364. Residues 533-656 (SLNRQPVDLG…TELTNRIKNG (124 aa)) are domain IV, binds dsDNA.

This sequence belongs to the DnaA family. Oligomerizes as a right-handed, spiral filament on DNA at oriC.

It localises to the cytoplasm. In terms of biological role, plays an essential role in the initiation and regulation of chromosomal replication. ATP-DnaA binds to the origin of replication (oriC) to initiate formation of the DNA replication initiation complex once per cell cycle. Binds the DnaA box (a 9 base pair repeat at the origin) and separates the double-stranded (ds)DNA. Forms a right-handed helical filament on oriC DNA; dsDNA binds to the exterior of the filament while single-stranded (ss)DNA is stabiized in the filament's interior. The ATP-DnaA-oriC complex binds and stabilizes one strand of the AT-rich DNA unwinding element (DUE), permitting loading of DNA polymerase. After initiation quickly degrades to an ADP-DnaA complex that is not apt for DNA replication. Binds acidic phospholipids. This chain is Chromosomal replication initiator protein DnaA, found in Streptomyces coelicolor (strain ATCC BAA-471 / A3(2) / M145).